The following is a 419-amino-acid chain: UDP-N-acetylglucosamine 1-carboxyvinyltransferase 2 (419 aa).

24-25 (KN) contributes to the phosphoenolpyruvate binding site. Arginine 94 contributes to the UDP-N-acetyl-alpha-D-glucosamine binding site. Cysteine 118 acts as the Proton donor in catalysis. 2-(S-cysteinyl)pyruvic acid O-phosphothioketal is present on cysteine 118. Residues 123–127 (RPIDQ), aspartate 307, and isoleucine 329 contribute to the UDP-N-acetyl-alpha-D-glucosamine site.

Belongs to the EPSP synthase family. MurA subfamily.

It is found in the cytoplasm. The catalysed reaction is phosphoenolpyruvate + UDP-N-acetyl-alpha-D-glucosamine = UDP-N-acetyl-3-O-(1-carboxyvinyl)-alpha-D-glucosamine + phosphate. It functions in the pathway cell wall biogenesis; peptidoglycan biosynthesis. Functionally, cell wall formation. Adds enolpyruvyl to UDP-N-acetylglucosamine. This chain is UDP-N-acetylglucosamine 1-carboxyvinyltransferase 2, found in Staphylococcus aureus (strain MSSA476).